The sequence spans 149 residues: Large-conductance mechanosensitive channel (149 aa).

A run of 3 helical transmembrane segments spans residues 16–36, 40–60, and 89–109; these read VMDL…VNSV, LIMP…KFIL, and GSFI…FMMV.

The protein belongs to the MscL family. As to quaternary structure, homopentamer.

It is found in the cell inner membrane. Its function is as follows. Channel that opens in response to stretch forces in the membrane lipid bilayer. May participate in the regulation of osmotic pressure changes within the cell. This chain is Large-conductance mechanosensitive channel, found in Paraburkholderia phymatum (strain DSM 17167 / CIP 108236 / LMG 21445 / STM815) (Burkholderia phymatum).